Here is a 308-residue protein sequence, read N- to C-terminus: GATA transcription factor 9 (308 aa).

A disordered region spans residues 34–57; it reads DDGLNTLPDSSTLSTGTLTDSSNS. Over residues 39-57 the composition is skewed to low complexity; it reads TLPDSSTLSTGTLTDSSNS. The Nuclear localization signal signature appears at 142–149; that stretch reads KARSKRSR. A GATA-type zinc finger spans residues 193–247; sequence SGGGRRCLHCATEKTPQWRTGPMGPKTLCNACGVRYKSGRLVPEYRPASSPTFVM.

Belongs to the type IV zinc-finger family. Class A subfamily.

It is found in the nucleus. Its function is as follows. Transcriptional activator that specifically binds 5'-GATA-3' or 5'-GAT-3' motifs within gene promoters. May be involved in the regulation of some light-responsive genes. The protein is GATA transcription factor 9 (GATA9) of Arabidopsis thaliana (Mouse-ear cress).